The following is a 409-amino-acid chain: L-cysteine:1D-myo-inositol 2-amino-2-deoxy-alpha-D-glucopyranoside ligase (409 aa).

Cys43 is a Zn(2+) binding site. Residues 43 to 46, Thr58, and 81 to 83 each bind L-cysteinyl-5'-AMP; these read CGIT and NVT. A 'HIGH' region motif is present at residues 45–55; that stretch reads ITPYDATHMGH. The 'ERGGDP' region signature appears at 183 to 188; it reads ERGGDP. Residue Trp224 participates in L-cysteinyl-5'-AMP binding. A Zn(2+)-binding site is contributed by Cys228. 246-248 contacts L-cysteinyl-5'-AMP; the sequence is GSD. His253 is a Zn(2+) binding site. Val280 provides a ligand contact to L-cysteinyl-5'-AMP. The 'KMSKS' region motif lies at 286–290; sequence KMSKS.

The protein belongs to the class-I aminoacyl-tRNA synthetase family. MshC subfamily. Monomer. The cofactor is Zn(2+).

It catalyses the reaction 1D-myo-inositol 2-amino-2-deoxy-alpha-D-glucopyranoside + L-cysteine + ATP = 1D-myo-inositol 2-(L-cysteinylamino)-2-deoxy-alpha-D-glucopyranoside + AMP + diphosphate + H(+). Catalyzes the ATP-dependent condensation of GlcN-Ins and L-cysteine to form L-Cys-GlcN-Ins. The polypeptide is L-cysteine:1D-myo-inositol 2-amino-2-deoxy-alpha-D-glucopyranoside ligase (Streptomyces griseus subsp. griseus (strain JCM 4626 / CBS 651.72 / NBRC 13350 / KCC S-0626 / ISP 5235)).